The primary structure comprises 401 residues: Membrane protein UL43 homolog (401 aa).

10 helical membrane-spanning segments follow: residues 43–63 (FVGI…IDLL), 67–87 (STCL…RVPI), 93–113 (IVTV…SVWV), 124–144 (LIVV…ISLF), 159–179 (ASLL…LVEL), 182–202 (VPIG…FGLA), 259–279 (PGVI…WIVL), 294–314 (YVVF…QLVI), 332–352 (AVCM…SLAF), and 379–399 (ISRW…ATII).

This sequence belongs to the alphaherpesvirinae HHV-1 UL43 family.

The protein resides in the membrane. This chain is Membrane protein UL43 homolog, found in Equine herpesvirus 1 (strain Ab4p) (EHV-1).